A 520-amino-acid chain; its full sequence is Cell division control protein 3 (520 aa).

Residues 1-24 are compositionally biased toward basic and acidic residues; that stretch reads MSLKEEQVSIKQDPEQEERQHDQF. The tract at residues 1–83 is disordered; it reads MSLKEEQVSI…SSQSEKGQVL (83 aa). Ser2 carries the post-translational modification N-acetylserine. Phosphoserine is present on Ser2. Lys4 is covalently cross-linked (Glycyl lysine isopeptide (Lys-Gly) (interchain with G-Cter in SUMO)). Ser9 bears the Phosphoserine mark. Glycyl lysine isopeptide (Lys-Gly) (interchain with G-Cter in SUMO) cross-links involve residues Lys11 and Lys30. The residue at position 47 (Thr47) is a Phosphothreonine. Residues 51-64 show a composition bias toward basic and acidic residues; it reads DSERFEAAESDVKV. Ser60 bears the Phosphoserine mark. Lys63 is covalently cross-linked (Glycyl lysine isopeptide (Lys-Gly) (interchain with G-Cter in SUMO)). Ser77 bears the Phosphoserine mark. A Septin-type G domain is found at 116–411; it reads NGFSFNLLCV…ENYRSSKLAK (296 aa). The G1 motif stretch occupies residues 126–133; it reads GPDGIGKT. 126 to 133 is a binding site for GTP; that stretch reads GPDGIGKT. Acidic residues predominate over residues 156–167; it reads ELANDQEEEEGQ. The disordered stretch occupies residues 156-181; that stretch reads ELANDQEEEEGQGEGHENQSQEQRHK. Over residues 168-179 the composition is skewed to basic and acidic residues; sequence GEGHENQSQEQR. A Phosphoserine modification is found at Ser175. The segment at 204–207 is G3 motif; sequence DTEG. GTP-binding positions include Gly207, 287 to 295, Gly344, and Arg360; that span reads KSDILTDEE. The G4 motif stretch occupies residues 286–289; it reads AKSD. Lys287 participates in a covalent cross-link: Glycyl lysine isopeptide (Lys-Gly) (interchain with G-Cter in SUMO). Residues 427-508 adopt a coiled-coil conformation; that stretch reads ISKQQEEKTL…INSASPNVNH (82 aa). Phosphothreonine is present on Thr468. The interval 496–520 is disordered; sequence ELSINSASPNVNHSPVPTKKKGFLR. Polar residues predominate over residues 497 to 510; it reads LSINSASPNVNHSP. Phosphoserine is present on Ser509.

It belongs to the TRAFAC class TrmE-Era-EngA-EngB-Septin-like GTPase superfamily. Septin GTPase family. Component of the septin complex which consists of CDC3, CDC10, CDC11, CDC12 and probably SHS1 and rearranges to a cortical collar of highly ordered filaments at the mother-bud-neck. A complex formed by CDC3, CDC10, CDC11 and CDC12 is capable of forming long filaments in vitro and the components seem to be present in a 2:2:2:2 arrangement in vivo. The filaments are proposed to be formed by the end-to-end polymerization of CDC3-CDC12-CDC11 complexes with CDC10 serving as a bridge to bundle the polymers into paired filaments. Component of the GIN4 complex composed of at least BNI5, CDC3, CDC10, CDC11, CDC12, GIN4, NAP1 and SHS1. Self-associates. Interacts with SIZ1 and SYP1. Phosphorylated by CDC28. Phosphorylation at the end of G1 may facilitate initiation of a new cell cycle by promoting disassembly of the obsolete septin ring from the previous cell cycle. Post-translationally, sumoylated during mitosis on the mother cell side of the bud neck by UBC9/SIZ1. Sumoylation probably plays a central role in regulating septin ring disassembly during the cell cycle.

Its subcellular location is the membrane. The protein localises to the bud neck. Functionally, septins are GTPases involved in cytokinesis that assemble early in the cell cycle as a patch at the incipient bud site and form a ring approximate 15 minutes before bud emergence, which transforms into an hour-glass shaped collar of cortical filaments that spans both sides of the mother-bud neck. This collar persists until just before cytokinesis, when it splits into two rings that occupy opposite sides of the neck. The septins at the bud neck serve as a structural scaffold that recruits different components involved in diverse processes at specific stages during the cell cycle. Many proteins bind asymmetrically to the septin collar. The septin assembly is regulated by protein kinases GIN4 and/or CLA4. May act by recruiting MYO1 and HOF1, a protein involved in septation, to the site of cleavage. Septins are also involved in cell morphogenesis, bud site selection, chitin deposition, cell cycle regulation, cell compartmentalization and spore wall formation. This Saccharomyces cerevisiae (strain ATCC 204508 / S288c) (Baker's yeast) protein is Cell division control protein 3 (CDC3).